The primary structure comprises 48 residues: Light-harvesting polypeptide B-885 beta-2 chain (48 aa).

At 1–20 the chain is on the cytoplasmic side; that stretch reads AEDRKSLSGLTEQEAQEFGT. A helical membrane pass occupies residues 21–43; it reads LYTQGVAFVAVIAIVAHALVWAW. H37 provides a ligand contact to a bacteriochlorophyll. Topologically, residues 44–48 are periplasmic; sequence RPWLQ.

This sequence belongs to the antenna complex beta subunit family. In terms of assembly, the core complex is formed by different alpha and beta chains, binding bacteriochlorophyll molecules, and arranged most probably in tetrameric structures disposed around the reaction center. The non-pigmented gamma chains may constitute additional components.

The protein resides in the cell inner membrane. Its function is as follows. Antenna complexes are light-harvesting systems, which transfer the excitation energy to the reaction centers. In Rhodocyclus tenuis (Rhodospirillum tenue), this protein is Light-harvesting polypeptide B-885 beta-2 chain.